The sequence spans 335 residues: Ferrochelatase (335 aa).

Residues H194 and E275 each coordinate Fe cation.

It belongs to the ferrochelatase family.

It localises to the cytoplasm. The enzyme catalyses heme b + 2 H(+) = protoporphyrin IX + Fe(2+). It participates in porphyrin-containing compound metabolism; protoheme biosynthesis; protoheme from protoporphyrin-IX: step 1/1. Its function is as follows. Catalyzes the ferrous insertion into protoporphyrin IX. This is Ferrochelatase from Sodalis glossinidius (strain morsitans).